The following is a 251-amino-acid chain: Hydroxyacylglutathione hydrolase (251 aa).

Positions 53, 55, 57, 58, 110, 127, and 165 each coordinate Zn(2+).

This sequence belongs to the metallo-beta-lactamase superfamily. Glyoxalase II family. In terms of assembly, monomer. It depends on Zn(2+) as a cofactor.

It catalyses the reaction an S-(2-hydroxyacyl)glutathione + H2O = a 2-hydroxy carboxylate + glutathione + H(+). The protein operates within secondary metabolite metabolism; methylglyoxal degradation; (R)-lactate from methylglyoxal: step 2/2. In terms of biological role, thiolesterase that catalyzes the hydrolysis of S-D-lactoyl-glutathione to form glutathione and D-lactic acid. The chain is Hydroxyacylglutathione hydrolase from Buchnera aphidicola subsp. Acyrthosiphon pisum (strain APS) (Acyrthosiphon pisum symbiotic bacterium).